Consider the following 439-residue polypeptide: Protein translocase subunit SecY (439 aa).

The next 10 membrane-spanning stretches (helical) occupy residues 28–48 (ILITVGLLILCRLGIFIPVPG), 73–93 (IFSGGGLSALGVFALGILPYI), 127–147 (LTRYVSLGWALLQSIVIAVWV), 156–176 (PLFTIQTALALVAGSMFVMWI), 179–199 (LITERGIGNGASLLIFLNIVA), 220–240 (VGGIVILLIVFLATIVGIVFV), 276–296 (GVMPIIFASAILVLPFSLANF), 318–338 (IYALFYLVLIVAFSYFYSSLI), 375–395 (LTILGAVFLGLVAIIPTAVEG), and 401–421 (TFQGFGATSLLILVGVAIDTA).

This sequence belongs to the SecY/SEC61-alpha family. As to quaternary structure, component of the Sec protein translocase complex. Heterotrimer consisting of SecY, SecE and SecG subunits. The heterotrimers can form oligomers, although 1 heterotrimer is thought to be able to translocate proteins. Interacts with the ribosome. Interacts with SecDF, and other proteins may be involved. Interacts with SecA.

The protein resides in the cell inner membrane. Its subcellular location is the cellular thylakoid membrane. The central subunit of the protein translocation channel SecYEG. Consists of two halves formed by TMs 1-5 and 6-10. These two domains form a lateral gate at the front which open onto the bilayer between TMs 2 and 7, and are clamped together by SecE at the back. The channel is closed by both a pore ring composed of hydrophobic SecY resides and a short helix (helix 2A) on the extracellular side of the membrane which forms a plug. The plug probably moves laterally to allow the channel to open. The ring and the pore may move independently. The protein is Protein translocase subunit SecY of Synechococcus elongatus (strain ATCC 33912 / PCC 7942 / FACHB-805) (Anacystis nidulans R2).